Reading from the N-terminus, the 397-residue chain is Mesoderm posterior protein 2 (397 aa).

4 disordered regions span residues 28-92, 152-208, 222-295, and 351-376; these read WDST…REKL, QRGD…GRRP, SPSA…VPWT, and PNSE…SGLR. Composition is skewed to low complexity over residues 32–48 and 58–71; these read SPAS…CDGA and SCSS…ATTP. Positions 81–135 constitute a bHLH domain; the sequence is GQRQSASEREKLRMRTLARALHELRRFLPPSLAPAGQSLTKIETLRLAIRYIGHL. 13 consecutive repeat copies span residues 179–180, 181–182, 183–184, 185–186, 187–188, 189–190, 191–192, 193–194, 195–196, 197–198, 199–200, 201–202, and 203–204. The segment at 179-204 is 13 X 2 AA tandem repeats of G-Q; that stretch reads GQGQGQGQGQGQGQGQGQGQGQGQGQ. Gly residues predominate over residues 180 to 206; sequence QGQGQGQGQGQGQGQGQGQGQGQGQGR. The segment covering 235–244 has biased composition (basic and acidic residues); it reads RLGRGVHDTD. 2 stretches are compositionally biased toward polar residues: residues 258–270 and 365–375; these read PPYS…SDAS and SEASPPQSSGL.

Degraded by the proteasome.

It localises to the nucleus. Its function is as follows. Transcription factor with important role in somitogenesis. Defines the rostrocaudal patterning of the somite by participating in distinct Notch pathways. Also regulates the FGF signaling pathway. Specifies the rostral half of the somites. Generates rostro-caudal polarity of somites by down-regulating in the presumptive rostral domain DLL1, a Notch ligand. Participates in the segment border formation by activating in the anterior presomitic mesoderm LFNG, a negative regulator of DLL1-Notch signaling. Acts as a strong suppressor of Notch activity. Together with MESP1 is involved in the epithelialization of somitic mesoderm and in the development of cardiac mesoderm. This Homo sapiens (Human) protein is Mesoderm posterior protein 2 (MESP2).